We begin with the raw amino-acid sequence, 329 residues long: Basic leucine zipper 61 (329 aa).

Disordered regions lie at residues 1–22 (MAQL…FSSQ) and 98–204 (DDVH…HDPK). Residues 10 to 22 (TMTTPNWPDFSSQ) show a composition bias toward polar residues. The span at 119-133 (PTRSSSNTSTPSDHN) shows a compositional bias: low complexity. Basic and acidic residues predominate over residues 139-154 (DNNKEAPPSDHDHHMD). Residues 155-169 (NNVANQNNAAGNNYN) are compositionally biased toward low complexity. Residues 202–254 (DPKRVKRILANRQSAQRSRVRKLQYISELERSVTSLQTEVSVLSPRVAFLDHQ) enclose the bZIP domain. Positions 204–223 (KRVKRILANRQSAQRSRVRK) are basic motif. Residues 230–251 (LERSVTSLQTEVSVLSPRVAFL) are leucine-zipper. Residues 304–313 (KMENNVSDQS) show a composition bias toward polar residues. Residues 304–329 (KMENNVSDQSPADIKPSVEKEQLLNV) are disordered. Positions 319–329 (PSVEKEQLLNV) are enriched in basic and acidic residues.

In terms of assembly, forms heterodimers with BZIP18, BZIP43 and VIP1/BZIP51.

The protein localises to the nucleus. In terms of biological role, transcriptional activator. The protein is Basic leucine zipper 61 of Arabidopsis thaliana (Mouse-ear cress).